Here is a 332-residue protein sequence, read N- to C-terminus: T-cell surface glycoprotein CD1b2 (332 aa).

A signal peptide spans 1–17 (MLLLVLALLAVLFPAGD). Residues 18–301 (TQDAFPEPIS…ILYWGNSSIG (284 aa)) are Extracellular-facing. Asn38, Asn75, and Asn146 each carry an N-linked (GlcNAc...) asparagine glycan. 3 cysteine pairs are disulfide-bonded: Cys120-Cys184, Cys149-Cys163, and Cys224-Cys279. In terms of domain architecture, Ig-like spans 185–295 (PRYLMSVLEA…LGGQDIILYW (111 aa)). Asn297 carries N-linked (GlcNAc...) asparagine glycosylation. A helical transmembrane segment spans residues 302 to 322 (WIILAVFVSCLIVLLFYVLWF). Over 323–332 (YKHWSYQDIL) the chain is Cytoplasmic. Positions 328–331 (YQDI) match the Internalization signal motif.

As to quaternary structure, heterodimer with B2M (beta-2-microglobulin). Interacts with saposin C.

It localises to the cell membrane. The protein localises to the endosome membrane. It is found in the lysosome membrane. Its function is as follows. Antigen-presenting protein that binds self and non-self lipid and glycolipid antigens and presents them to T-cell receptors on natural killer T-cells. The sequence is that of T-cell surface glycoprotein CD1b2 (CD1B2) from Cavia porcellus (Guinea pig).